The chain runs to 248 residues: Phycocyanobilin:ferredoxin oxidoreductase (248 aa).

This sequence belongs to the HY2 family.

The enzyme catalyses (2R,3Z)-phycocyanobilin + 4 oxidized [2Fe-2S]-[ferredoxin] = biliverdin IXalpha + 4 reduced [2Fe-2S]-[ferredoxin] + 4 H(+). In terms of biological role, catalyzes the four-electron reduction of biliverdin IX-alpha (2-electron reduction at both the A and D rings); the reaction proceeds via an isolatable 2-electron intermediate, 181,182-dihydrobiliverdin. The sequence is that of Phycocyanobilin:ferredoxin oxidoreductase (pcyA) from Synechocystis sp. (strain ATCC 27184 / PCC 6803 / Kazusa).